Here is a 164-residue protein sequence, read N- to C-terminus: Phosphopantetheine adenylyltransferase (164 aa).

Threonine 9 is a binding site for substrate. Residues 9-10 (TF) and histidine 17 contribute to the ATP site. Substrate-binding residues include lysine 41, leucine 78, and arginine 92. Residues 93 to 95 (GLR), glutamate 103, and 128 to 134 (RQAIASK) contribute to the ATP site.

This sequence belongs to the bacterial CoaD family. As to quaternary structure, homohexamer. Requires Mg(2+) as cofactor.

Its subcellular location is the cytoplasm. The catalysed reaction is (R)-4'-phosphopantetheine + ATP + H(+) = 3'-dephospho-CoA + diphosphate. It participates in cofactor biosynthesis; coenzyme A biosynthesis; CoA from (R)-pantothenate: step 4/5. Functionally, reversibly transfers an adenylyl group from ATP to 4'-phosphopantetheine, yielding dephospho-CoA (dPCoA) and pyrophosphate. The chain is Phosphopantetheine adenylyltransferase from Paracoccus denitrificans (strain Pd 1222).